Reading from the N-terminus, the 357-residue chain is DNA replication and repair protein RecF (357 aa).

30 to 37 provides a ligand contact to ATP; the sequence is GANGSGKT.

It belongs to the RecF family.

Its subcellular location is the cytoplasm. The RecF protein is involved in DNA metabolism; it is required for DNA replication and normal SOS inducibility. RecF binds preferentially to single-stranded, linear DNA. It also seems to bind ATP. In Escherichia coli O139:H28 (strain E24377A / ETEC), this protein is DNA replication and repair protein RecF.